Reading from the N-terminus, the 406-residue chain is Vacuole membrane protein 1 (406 aa).

Position 2 is an N-acetylalanine (alanine 2). Over 2–43 the chain is Cytoplasmic; sequence AENGQNCDQRRVAMNKEQYNGNFTDPSSVNEKKRRDREERQN. Residues 44–63 traverse the membrane as a helical segment; the sequence is IVLWRQPLITLQYFSLETLV. Residues 64–77 are Extracellular-facing; that stretch reads ILKEWTSKLWHRQS. A helical membrane pass occupies residues 78-98; sequence IVVSFLLLLAVLTATYYVEGA. Residues 99–109 are Cytoplasmic-facing; it reads HQQYVQRIEKQ. The helical transmembrane segment at 110-130 threads the bilayer; it reads FLLYAYWIGLGILSSVGLGTG. Topologically, residues 131-250 are extracellular; it reads LHTFLLYLGP…ASRAKLAVQN (120 aa). The tract at residues 173 to 316 is VTT domain; it reads GTEGTISLWS…FVIVAFSKHI (144 aa). Residues 251–271 traverse the membrane as a helical segment; that stretch reads LVQKVGFFGILACASIPNPLF. The Cytoplasmic portion of the chain corresponds to 272 to 273; that stretch reads DL. Residues 274–294 traverse the membrane as a helical segment; it reads AGITCGHFLVPFWTFFGATLI. Residues 295–306 lie on the Extracellular side of the membrane; that stretch reads GKAIIKMHIQKL. The chain crosses the membrane as a helical span at residues 307-327; sequence FVIVAFSKHIVEQMVAFIGAV. Residues 328 to 363 lie on the Cytoplasmic side of the membrane; it reads PGIGPSLQKPFQEYLEAQRQKLHHRSEMGTPQGENW. The chain crosses the membrane as a helical span at residues 364–384; that stretch reads LSWMFEKLVVVMVCYFILSII. The Extracellular portion of the chain corresponds to 385–406; that stretch reads NSMAQSYAKRIQQRLDPKEKTK.

Belongs to the VMP1 family. As to quaternary structure, interacts with BECN1. Interacts with TJP1. Interacts with TP53INP2. Interacts with TMEM41B. Interacts with ATP2A2, PLN and SLN; competes with PLN and SLN to prevent them from forming an inhibitory complex with ATP2A2. Interacts with ATG2A.

Its subcellular location is the endoplasmic reticulum-Golgi intermediate compartment membrane. The protein resides in the cell membrane. The protein localises to the vacuole membrane. It is found in the endoplasmic reticulum membrane. The enzyme catalyses a 1,2-diacyl-sn-glycero-3-phospho-L-serine(in) = a 1,2-diacyl-sn-glycero-3-phospho-L-serine(out). It carries out the reaction cholesterol(in) = cholesterol(out). It catalyses the reaction a 1,2-diacyl-sn-glycero-3-phosphocholine(in) = a 1,2-diacyl-sn-glycero-3-phosphocholine(out). The catalysed reaction is a 1,2-diacyl-sn-glycero-3-phosphoethanolamine(in) = a 1,2-diacyl-sn-glycero-3-phosphoethanolamine(out). Phospholipid scramblase involved in lipid homeostasis and membrane dynamics processes. Has phospholipid scramblase activity toward cholesterol and phosphatidylserine, as well as phosphatidylethanolamine and phosphatidylcholine. Required for autophagosome formation: participates in early stages of autophagosome biogenesis at the endoplasmic reticulum (ER) membrane by reequilibrating the leaflets of the ER as lipids are extracted by ATG2 (ATG2A or ATG2B) to mediate autophagosome assembly. Regulates ATP2A2 activity to control ER-isolation membrane contacts for autophagosome formation. In addition to autophagy, involved in other processes in which phospholipid scramblase activity is required. Modulates ER contacts with lipid droplets, mitochondria and endosomes. Plays an essential role in formation of cell junctions. Upon stress such as bacterial and viral infection, promotes formation of cytoplasmic vacuoles followed by cell death. Involved in the cytoplasmic vacuolization of acinar cells during the early stage of acute pancreatitis. This chain is Vacuole membrane protein 1, found in Bos taurus (Bovine).